A 986-amino-acid polypeptide reads, in one-letter code: Ephrin type-A receptor 4-A (986 aa).

The signal sequence occupies residues 1–20 (MAGIVHGILFCGLFGLCWAV). Residues 21–547 (TGSRIYPASE…MIGEGASPTV (527 aa)) are Extracellular-facing. The Eph LBD domain maps to 30–209 (EVTLLDSRSV…FYKKCPLTVR (180 aa)). Fibronectin type-III domains are found at residues 328–438 (PPSA…TNQA) and 439–536 (APST…TVPS). N340 and N407 each carry an N-linked (GlcNAc...) asparagine glycan. The helical transmembrane segment at 548 to 569 (LLVSVAGSIVLVVILIAAFVIS) threads the bilayer. Residues 570-986 (RRRSKYSKAK…QQIQGRMVPV (417 aa)) are Cytoplasmic-facing. 2 positions are modified to phosphotyrosine; by autocatalysis: Y595 and Y601. Residues 620-881 (IKIEKVIGVG…QIVSMLDKLI (262 aa)) form the Protein kinase domain. Residues 626–634 (IGVGEFGEV) and K652 contribute to the ATP site. Catalysis depends on D745, which acts as the Proton acceptor. Residues Y778 and Y928 each carry the phosphotyrosine; by autocatalysis modification. Residues 911-975 (SQVASVLDWL…LSSVQGMRTQ (65 aa)) form the SAM domain. A PDZ-binding motif is present at residues 984–986 (VPV).

This sequence belongs to the protein kinase superfamily. Tyr protein kinase family. Ephrin receptor subfamily.

Its subcellular location is the cell membrane. The protein localises to the early endosome. The catalysed reaction is L-tyrosyl-[protein] + ATP = O-phospho-L-tyrosyl-[protein] + ADP + H(+). Functionally, receptor tyrosine kinase which binds membrane-bound ephrin family ligands residing on adjacent cells, leading to contact-dependent bidirectional signaling into neighboring cells. The signaling pathway downstream of the receptor is referred to as forward signaling while the signaling pathway downstream of the ephrin ligand is referred to as reverse signaling. Highly promiscuous, it has the unique property among Eph receptors to bind and to be physiologically activated by both GPI-anchored ephrin-A and transmembrane ephrin-B ligands including EFNA1 and EFNB3. Upon activation by ephrin ligands, modulates cell morphology and integrin-dependent cell adhesion through regulation of the Rac, Rap and Rho GTPases activity. Plays an important role in the development of the nervous system controlling different steps of axonal guidance including the establishment of the corticospinal projections. In Xenopus laevis (African clawed frog), this protein is Ephrin type-A receptor 4-A (epha4-a).